We begin with the raw amino-acid sequence, 94 residues long: MQIDEKLLSKLEKLSALQITKNRNETIAQLSEIVNFVKKLNELDLDSQEITVSTIKGGAPLRIDEIRNSNVIDEVLDCAPKKQEHFFIVPKIIE.

It belongs to the GatC family. Heterotrimer of A, B and C subunits.

It catalyses the reaction L-glutamyl-tRNA(Gln) + L-glutamine + ATP + H2O = L-glutaminyl-tRNA(Gln) + L-glutamate + ADP + phosphate + H(+). The catalysed reaction is L-aspartyl-tRNA(Asn) + L-glutamine + ATP + H2O = L-asparaginyl-tRNA(Asn) + L-glutamate + ADP + phosphate + 2 H(+). Functionally, allows the formation of correctly charged Asn-tRNA(Asn) or Gln-tRNA(Gln) through the transamidation of misacylated Asp-tRNA(Asn) or Glu-tRNA(Gln) in organisms which lack either or both of asparaginyl-tRNA or glutaminyl-tRNA synthetases. The reaction takes place in the presence of glutamine and ATP through an activated phospho-Asp-tRNA(Asn) or phospho-Glu-tRNA(Gln). The sequence is that of Aspartyl/glutamyl-tRNA(Asn/Gln) amidotransferase subunit C from Campylobacter jejuni subsp. doylei (strain ATCC BAA-1458 / RM4099 / 269.97).